We begin with the raw amino-acid sequence, 680 residues long: Dipeptidyl carboxypeptidase (680 aa).

Residue histidine 469 participates in Zn(2+) binding. Residue glutamate 470 is part of the active site. Residues histidine 473 and histidine 476 each contribute to the Zn(2+) site.

Belongs to the peptidase M3 family. Zn(2+) serves as cofactor.

The protein localises to the cytoplasm. It carries out the reaction Hydrolysis of unblocked, C-terminal dipeptides from oligopeptides, with broad specificity. Does not hydrolyze bonds in which P1' is Pro, or both P1 and P1' are Gly.. Removes dipeptides from the C-termini of N-blocked tripeptides, tetrapeptides and larger peptides. The sequence is that of Dipeptidyl carboxypeptidase (dcp) from Salmonella typhimurium (strain LT2 / SGSC1412 / ATCC 700720).